The following is a 373-amino-acid chain: Cytoplasmic tRNA 2-thiolation protein 1 (373 aa).

The protein belongs to the TtcA family. CTU1/NCS6/ATPBD3 subfamily.

It localises to the cytoplasm. Its pathway is tRNA modification; 5-methoxycarbonylmethyl-2-thiouridine-tRNA biosynthesis. Plays a central role in 2-thiolation of mcm(5)S(2)U at tRNA wobble positions of tRNA(Lys), tRNA(Glu) and tRNA(Gln). Directly binds tRNAs and probably acts by catalyzing adenylation of tRNAs, an intermediate required for 2-thiolation. It is unclear whether it acts as a sulfurtransferase that transfers sulfur from thiocarboxylated URM1 onto the uridine of tRNAs at wobble position. Prior mcm(5) tRNA modification by the elongator complex is required for 2-thiolation. May also be involved in protein urmylation. This is Cytoplasmic tRNA 2-thiolation protein 1 from Eremothecium gossypii (strain ATCC 10895 / CBS 109.51 / FGSC 9923 / NRRL Y-1056) (Yeast).